The following is a 360-amino-acid chain: Probable dual-specificity RNA methyltransferase RlmN (360 aa).

The Proton acceptor role is filled by Glu91. The Radical SAM core domain maps to 97–335 (QHYGQSVCVT…CVVRQEHGTD (239 aa)). Cys104 and Cys340 are joined by a disulfide. The [4Fe-4S] cluster site is built by Cys111, Cys115, and Cys118. S-adenosyl-L-methionine-binding positions include 163-164 (GE), Ser195, 218-220 (SLH), and Asn296. The active-site S-methylcysteine intermediate is the Cys340.

This sequence belongs to the radical SAM superfamily. RlmN family. The cofactor is [4Fe-4S] cluster.

The protein localises to the cytoplasm. The catalysed reaction is adenosine(2503) in 23S rRNA + 2 reduced [2Fe-2S]-[ferredoxin] + 2 S-adenosyl-L-methionine = 2-methyladenosine(2503) in 23S rRNA + 5'-deoxyadenosine + L-methionine + 2 oxidized [2Fe-2S]-[ferredoxin] + S-adenosyl-L-homocysteine. It catalyses the reaction adenosine(37) in tRNA + 2 reduced [2Fe-2S]-[ferredoxin] + 2 S-adenosyl-L-methionine = 2-methyladenosine(37) in tRNA + 5'-deoxyadenosine + L-methionine + 2 oxidized [2Fe-2S]-[ferredoxin] + S-adenosyl-L-homocysteine. Specifically methylates position 2 of adenine 2503 in 23S rRNA and position 2 of adenine 37 in tRNAs. The sequence is that of Probable dual-specificity RNA methyltransferase RlmN from Streptococcus equi subsp. equi (strain 4047).